A 715-amino-acid polypeptide reads, in one-letter code: SANT and BTB domain regulator of class switch recombination (715 aa).

An SANT domain is found at 21–59; the sequence is DMILCSLVGVPQPISWDSVARLVPGYTPKECAKRFEELK. One can recognise a BTB domain in the interval 146-254; the sequence is MVIHVCDEAK…ECIRYCHKNM (109 aa). Over residues 552 to 573 the composition is skewed to acidic residues; that stretch reads SEEEDYTTGSEVTEDEVGDEEE. Disordered stretches follow at residues 552–623 and 689–715; these read SEEE…VSLQ and SAHSNTRQMNTEKIPRPKPRFGTGRPT. Positions 578-605 are enriched in basic residues; that stretch reads QAGRKVKPKRSAKQTKKHISSPSIHKKE. Composition is skewed to polar residues over residues 614–623 and 690–699; these read DSSPFTVSLQ and AHSNTRQMNT.

This sequence belongs to the KIAA1841 family. Homodimer.

In terms of biological role, negatively regulates class switch recombination or isotype switching in splenic B-cells. This chain is SANT and BTB domain regulator of class switch recombination, found in Xenopus laevis (African clawed frog).